Here is a 144-residue protein sequence, read N- to C-terminus: uncharacterized protein (144 aa).

The next 4 helical transmembrane spans lie at 7–29 (FPAS…RDLV), 51–73 (VAIG…FLLV), 85–107 (AVLA…VGAF), and 122–139 (HLHH…LIFV).

It is found in the cell membrane. This is an uncharacterized protein from Treponema pallidum (strain Nichols).